A 514-amino-acid chain; its full sequence is GTPase Obg (514 aa).

The Obg domain occupies 2 to 159; it reads ATFVDRVTVH…GDILLELKTV (158 aa). The tract at residues 62–88 is disordered; that stretch reads RRPHRSSGNGGFGMGDHRSGHTGEDLE. Residues 76 to 85 show a composition bias toward basic and acidic residues; it reads GDHRSGHTGE. The OBG-type G domain maps to 160 to 336; it reads ADIALVGYPS…LSFALAELVE (177 aa). Residues 166–173, 191–195, 212–215, 288–291, and 317–319 contribute to the GTP site; these read GYPSAGKS, FTTLH, DVPG, NKID, and STV. Mg(2+) is bound by residues Ser173 and Thr193. The OCT domain occupies 356 to 440; the sequence is PKTVDDSGFV…ENGVVFDWEP (85 aa).

Belongs to the TRAFAC class OBG-HflX-like GTPase superfamily. OBG GTPase family. In terms of assembly, monomer. It depends on Mg(2+) as a cofactor.

The protein resides in the cytoplasm. An essential GTPase which binds GTP, GDP and possibly (p)ppGpp with moderate affinity, with high nucleotide exchange rates and a fairly low GTP hydrolysis rate. Plays a role in control of the cell cycle, stress response, ribosome biogenesis and in those bacteria that undergo differentiation, in morphogenesis control. In Leifsonia xyli subsp. xyli (strain CTCB07), this protein is GTPase Obg.